A 262-amino-acid polypeptide reads, in one-letter code: Putative ankyrin repeat protein R848 (262 aa).

7 ANK repeats span residues 8–37, 38–67, 68–97, 99–127, 128–157, 159–187, and 189–217; these read SNDYALSLASKNGHIKVVKYLVSKDANVTH, DNNYAVRYASENGHFEVVKYLVDQGADIRD, CRDYAVRFASENGHLEVVKYLVDKGANIRA, DDYAVCLASVNGYIEIVKYLVSQGANFRA, DNDYAVRFASENGYLEVVKFLVDQGADIRA, DDYAIISASVYGHLEVIKFLMSQGADFRS, and NNASIKLAIKYKHPEIIEYFLTQCTDVNT.

This is Putative ankyrin repeat protein R848 from Acanthamoeba polyphaga (Amoeba).